The following is a 427-amino-acid chain: Serine--tRNA ligase (427 aa).

An L-serine-binding site is contributed by threonine 235–glutamate 237. ATP contacts are provided by residues arginine 266–glutamate 268 and valine 282. Glutamate 289 serves as a coordination point for L-serine. Glutamate 353–serine 356 lines the ATP pocket. Serine 389 is an L-serine binding site.

The protein belongs to the class-II aminoacyl-tRNA synthetase family. Type-1 seryl-tRNA synthetase subfamily. In terms of assembly, homodimer. The tRNA molecule binds across the dimer.

It is found in the cytoplasm. The enzyme catalyses tRNA(Ser) + L-serine + ATP = L-seryl-tRNA(Ser) + AMP + diphosphate + H(+). It catalyses the reaction tRNA(Sec) + L-serine + ATP = L-seryl-tRNA(Sec) + AMP + diphosphate + H(+). It participates in aminoacyl-tRNA biosynthesis; selenocysteinyl-tRNA(Sec) biosynthesis; L-seryl-tRNA(Sec) from L-serine and tRNA(Sec): step 1/1. Its function is as follows. Catalyzes the attachment of serine to tRNA(Ser). Is also able to aminoacylate tRNA(Sec) with serine, to form the misacylated tRNA L-seryl-tRNA(Sec), which will be further converted into selenocysteinyl-tRNA(Sec). The sequence is that of Serine--tRNA ligase from Chloroherpeton thalassium (strain ATCC 35110 / GB-78).